Here is a 533-residue protein sequence, read N- to C-terminus: uncharacterized protein (533 aa).

5 helical membrane passes run 4-23 (FLAA…GLAI), 28-47 (VFGL…VVST), 57-79 (IVYQ…PAFF), 86-108 (GWKL…WVLI), and 151-173 (VIGY…AVGA). Residues 263–347 (LGEERETKIE…VAEVRRFLGD (85 aa)) enclose the RCK C-terminal domain. Helical transmembrane passes span 352-374 (LADV…GAIP), 379-401 (GGTT…LGAL), 422-444 (LGLA…AALT), and 454-476 (GGLV…VLRL).

This sequence belongs to the AAE transporter (TC 2.A.81) family.

It localises to the cell membrane. This is an uncharacterized protein from Corynebacterium glutamicum (strain ATCC 13032 / DSM 20300 / JCM 1318 / BCRC 11384 / CCUG 27702 / LMG 3730 / NBRC 12168 / NCIMB 10025 / NRRL B-2784 / 534).